A 419-amino-acid polypeptide reads, in one-letter code: UDP-N-acetylglucosamine 1-carboxyvinyltransferase (419 aa).

22-23 contacts phosphoenolpyruvate; sequence KN. Arg91 is a binding site for UDP-N-acetyl-alpha-D-glucosamine. Residue Cys115 is the Proton donor of the active site. Cys115 carries the post-translational modification 2-(S-cysteinyl)pyruvic acid O-phosphothioketal. UDP-N-acetyl-alpha-D-glucosamine-binding positions include 120-124, 160-163, Asp305, and Val327; these read RPVDL and KVSV.

The protein belongs to the EPSP synthase family. MurA subfamily.

The protein localises to the cytoplasm. The enzyme catalyses phosphoenolpyruvate + UDP-N-acetyl-alpha-D-glucosamine = UDP-N-acetyl-3-O-(1-carboxyvinyl)-alpha-D-glucosamine + phosphate. The protein operates within cell wall biogenesis; peptidoglycan biosynthesis. Its function is as follows. Cell wall formation. Adds enolpyruvyl to UDP-N-acetylglucosamine. The protein is UDP-N-acetylglucosamine 1-carboxyvinyltransferase of Salmonella agona (strain SL483).